Here is a 160-residue protein sequence, read N- to C-terminus: Phosphopantetheine adenylyltransferase (160 aa).

Threonine 11 serves as a coordination point for substrate. Residues 11-12 (TF) and histidine 19 contribute to the ATP site. Positions 43, 75, and 89 each coordinate substrate. Residues 90-92 (GLR), glutamate 100, and 125-131 (YSFLSSS) each bind ATP.

This sequence belongs to the bacterial CoaD family. Homohexamer. Requires Mg(2+) as cofactor.

The protein localises to the cytoplasm. It carries out the reaction (R)-4'-phosphopantetheine + ATP + H(+) = 3'-dephospho-CoA + diphosphate. It participates in cofactor biosynthesis; coenzyme A biosynthesis; CoA from (R)-pantothenate: step 4/5. In terms of biological role, reversibly transfers an adenylyl group from ATP to 4'-phosphopantetheine, yielding dephospho-CoA (dPCoA) and pyrophosphate. The protein is Phosphopantetheine adenylyltransferase of Listeria monocytogenes serotype 4b (strain CLIP80459).